Consider the following 161-residue polypeptide: Ubiquitin-conjugating enzyme E2Q-like protein 1 (161 aa).

The UBC core domain occupies methionine 1–valine 154. The active-site Glycyl thioester intermediate is cysteine 88.

This sequence belongs to the ubiquitin-conjugating enzyme family. As to quaternary structure, interacts with FBXW7.

Its subcellular location is the nucleus. The enzyme catalyses S-ubiquitinyl-[E1 ubiquitin-activating enzyme]-L-cysteine + [E2 ubiquitin-conjugating enzyme]-L-cysteine = [E1 ubiquitin-activating enzyme]-L-cysteine + S-ubiquitinyl-[E2 ubiquitin-conjugating enzyme]-L-cysteine.. The protein operates within protein modification; protein ubiquitination. Its function is as follows. Probable E2 ubiquitin-protein ligase that catalyzes the covalent attachment of ubiquitin to target proteins. May facilitate the monoubiquitination and degradation of MTOR and CCNE1 through interaction with FBXW7. The sequence is that of Ubiquitin-conjugating enzyme E2Q-like protein 1 (UBE2QL1) from Homo sapiens (Human).